The sequence spans 69 residues: U2-agatoxin-Ao1c (69 aa).

The first 20 residues, 1–20 (MKAIISLLLISAMVFSMIEA), serve as a signal peptide directing secretion. The propeptide occupies 21–34 (VPVEEGLQLFEGER). Intrachain disulfides connect Cys-36–Cys-52, Cys-43–Cys-57, and Cys-51–Cys-67. Leu-68 is subject to Leucine amide.

Belongs to the neurotoxin 01 (U2-agtx) family. In terms of tissue distribution, expressed by the venom gland.

It is found in the secreted. In terms of biological role, insect active toxin causing rapid but reversible paralysis in crickets. No activity shown in mammals. Does not show effect on mammalian voltage-gated calcium channels. In Agelena orientalis (Funnel-web spider), this protein is U2-agatoxin-Ao1c.